The chain runs to 427 residues: ATP-dependent RNA helicase DDX39A (427 aa).

Acidic residues predominate over residues 1–19 (MAEQDVENELLDYDEDEEP). Residues 1–35 (MAEQDVENELLDYDEDEEPQVPQESTPAPPKKDVK) are disordered. Residue A2 is modified to N-acetylalanine. K31 is covalently cross-linked (Glycyl lysine isopeptide (Lys-Gly) (interchain with G-Cter in SUMO2)). An N6-acetyllysine; alternate modification is found at K35. A Glycyl lysine isopeptide (Lys-Gly) (interchain with G-Cter in SUMO2); alternate cross-link involves residue K35. Phosphoserine is present on S37. The Q motif signature appears at 44 to 72 (SGFRDFLLKPELLRAIVDCGFEHPSEVQH). Residues 75–248 (IPQAILGMDV…RKFMQDPMEV (174 aa)) form the Helicase ATP-binding domain. Position 88-95 (88-95 (AKSGMGKT)) interacts with ATP. Glycyl lysine isopeptide (Lys-Gly) (interchain with G-Cter in SUMO2) cross-links involve residues K154 and K162. T171 is modified (phosphothreonine). Residues 195 to 198 (DECD) carry the DECD box motif. Glycyl lysine isopeptide (Lys-Gly) (interchain with G-Cter in SUMO2) cross-links involve residues K240 and K255. The region spanning 260 to 421 (GLQQYYVKLK…ELPEEIDIST (162 aa)) is the Helicase C-terminal domain. S426 bears the Phosphoserine mark.

Belongs to the DEAD box helicase family. DECD subfamily. As to quaternary structure, binds ALYREF/THOC4 and DDX39B/BAT1. Interacts with the apo-AREX complex component SARNP. Interacts with MX1. Interacts with MCM3AP isoform GANP. Interacts with ECD. Interacts with PHAX; this interaction stimulates PHAX RNA binding activity. Post-translationally, SUMOylated by RANBP2; SUMOylation modification affects its ability to bind RNA.

It is found in the nucleus. The protein resides in the cytoplasm. The enzyme catalyses ATP + H2O = ADP + phosphate + H(+). Functionally, helicase that plays an essential role in mRNA export and is involved in multiple steps in RNA metabolism including alternative splicing. Regulates nuclear mRNA export to the cytoplasm through association with ECD. Also involved in spliceosomal uridine-rich small nuclear RNA (U snRNA) export by stimulating the RNA binding of adapter PHAX. Plays a role in the negative regulation of type I IFN production by increasing the nuclear retention of antiviral transcripts and thus reducing their protein expression. Independently of the interferon pathway, plays an antiviral role against alphaviruses by binding to a 5' conserved sequence element in the viral genomic RNA. This chain is ATP-dependent RNA helicase DDX39A (Ddx39a), found in Rattus norvegicus (Rat).